Consider the following 538-residue polypeptide: Phosphoenolpyruvate carboxykinase (ATP) (538 aa).

Residues arginine 64, tyrosine 206, and lysine 212 each coordinate substrate. ATP is bound by residues lysine 212, histidine 231, and glycine 247–threonine 255. The Mn(2+) site is built by lysine 212 and histidine 231. Aspartate 268 is a Mn(2+) binding site. ATP is bound by residues glutamate 296, arginine 332, arginine 448–isoleucine 449, and threonine 454. Substrate is bound at residue arginine 332.

The protein belongs to the phosphoenolpyruvate carboxykinase (ATP) family. In terms of assembly, monomer. Requires Mn(2+) as cofactor.

The protein localises to the cytoplasm. The enzyme catalyses oxaloacetate + ATP = phosphoenolpyruvate + ADP + CO2. It functions in the pathway carbohydrate biosynthesis; gluconeogenesis. Its function is as follows. Involved in the gluconeogenesis. Catalyzes the conversion of oxaloacetate (OAA) to phosphoenolpyruvate (PEP) through direct phosphoryl transfer between the nucleoside triphosphate and OAA. The chain is Phosphoenolpyruvate carboxykinase (ATP) from Enterobacter sp. (strain 638).